The sequence spans 314 residues: Methionyl-tRNA formyltransferase (314 aa).

108–111 (SLLP) is a (6S)-5,6,7,8-tetrahydrofolate binding site.

The protein belongs to the Fmt family.

The enzyme catalyses L-methionyl-tRNA(fMet) + (6R)-10-formyltetrahydrofolate = N-formyl-L-methionyl-tRNA(fMet) + (6S)-5,6,7,8-tetrahydrofolate + H(+). In terms of biological role, attaches a formyl group to the free amino group of methionyl-tRNA(fMet). The formyl group appears to play a dual role in the initiator identity of N-formylmethionyl-tRNA by promoting its recognition by IF2 and preventing the misappropriation of this tRNA by the elongation apparatus. The chain is Methionyl-tRNA formyltransferase from Akkermansia muciniphila (strain ATCC BAA-835 / DSM 22959 / JCM 33894 / BCRC 81048 / CCUG 64013 / CIP 107961 / Muc).